Reading from the N-terminus, the 210-residue chain is Synaptosomal-associated protein 23 (210 aa).

Residue Met-1 is modified to N-acetylmethionine. 4 positions are modified to phosphoserine: Ser-5, Ser-20, Ser-23, and Ser-34. One can recognise a t-SNARE coiled-coil homology 1 domain in the interval 14-76; it reads HQVTDESLES…REAEKTLTEL (63 aa). The stretch at 23-76 forms a coiled coil; it reads STRRILGLAIESQDAGIKTITMLDEQGEQLNRIEEGMDQINKDMREAEKTLTEL. 5 S-palmitoyl cysteine lipidation sites follow: Cys-79, Cys-80, Cys-83, Cys-85, and Cys-87. The tract at residues 104-136 is disordered; the sequence is GDGGDSSPSNVVSKQPSRITNGQPQQTTGAASG. Polar residues predominate over residues 109–133; it reads SSPSNVVSKQPSRITNGQPQQTTGA. A phosphoserine mark is found at Ser-110 and Ser-160. Residues 145–207 enclose the t-SNARE coiled-coil homology 2 domain; the sequence is DAREDEMEEN…DIANTRAKKL (63 aa).

Belongs to the SNAP-25 family. Homotetramer (via coiled-coil domain), also forms heterotetramers with STX4 and VAMP3. Found in a complex with VAMP8 and STX1A. Found in a complex with VAMP8 and STX4 in pancreas. Interacts simultaneously with SNAPIN and SYN4. Interacts with STX1A. Interacts with STX12. Interacts tightly to multiple syntaxins and synaptobrevins/VAMPs. Interacts with ZDHHC13 (via ANK repeats). Interacts with ZDHHC17 (via ANK repeats).

Its subcellular location is the cell membrane. The protein resides in the synapse. It localises to the synaptosome. It is found in the cytoplasmic vesicle membrane. In terms of biological role, essential component of the high affinity receptor for the general membrane fusion machinery and an important regulator of transport vesicle docking and fusion. The protein is Synaptosomal-associated protein 23 (Snap23) of Rattus norvegicus (Rat).